The sequence spans 251 residues: Large ribosomal subunit protein uL3 (251 aa).

Glutamine 151 is modified (N5-methylglutamine). Positions 221-251 (GLKQAANSNDSAAADTPAEVAAVEATEGQEG) are disordered. Over residues 225–251 (AANSNDSAAADTPAEVAAVEATEGQEG) the composition is skewed to low complexity.

The protein belongs to the universal ribosomal protein uL3 family. In terms of assembly, part of the 50S ribosomal subunit. Forms a cluster with proteins L14 and L19. Post-translationally, methylated by PrmB.

Its function is as follows. One of the primary rRNA binding proteins, it binds directly near the 3'-end of the 23S rRNA, where it nucleates assembly of the 50S subunit. The sequence is that of Large ribosomal subunit protein uL3 from Novosphingobium aromaticivorans (strain ATCC 700278 / DSM 12444 / CCUG 56034 / CIP 105152 / NBRC 16084 / F199).